Here is a 439-residue protein sequence, read N- to C-terminus: Microfibrillar-associated protein 1 (439 aa).

The segment covering 1 to 17 (MSVPSSLMKQPPIQSTA) has biased composition (polar residues). The tract at residues 1–200 (MSVPSSLMKQ…SEDEMEPRLK (200 aa)) is disordered. Ser2 carries the N-acetylserine modification. Positions 23-34 (RNEKGEISMEKV) are enriched in basic and acidic residues. Ser52 and Ser53 each carry phosphoserine. Residues 61–70 (QFIKKAKEQE) are compositionally biased toward basic and acidic residues. Lys67 is covalently cross-linked (Glycyl lysine isopeptide (Lys-Gly) (interchain with G-Cter in SUMO2)). Positions 71–81 (AEPEEQEEDSS) are enriched in acidic residues. Residues Ser94, Ser116, Ser118, Ser132, and Ser133 each carry the phosphoserine modification. Composition is skewed to acidic residues over residues 112–122 (VVGESDSEVEG) and 131–144 (DSSE…DEEE). Residues 145–163 (IERRRGMMRQRAQERKNEE) show a composition bias toward basic and acidic residues. Residues 178–195 (ESESESEYEEYTDSEDEM) are compositionally biased toward acidic residues. Lys249 is covalently cross-linked (Glycyl lysine isopeptide (Lys-Gly) (interchain with G-Cter in SUMO2)). The residue at position 267 (Thr267) is a Phosphothreonine. Lys357 is covalently cross-linked (Glycyl lysine isopeptide (Lys-Gly) (interchain with G-Cter in SUMO2)). The residue at position 361 (Ser361) is a Phosphoserine. Residues Lys371, Lys381, Lys415, and Lys418 each participate in a glycyl lysine isopeptide (Lys-Gly) (interchain with G-Cter in SUMO2) cross-link. Ser432 carries the phosphoserine modification.

It belongs to the MFAP1 family. Component of the spliceosome B complex. Interacts with PRPF38A (via N-terminal interaction domain).

It is found in the nucleus. Its function is as follows. Involved in pre-mRNA splicing as a component of the spliceosome. This chain is Microfibrillar-associated protein 1, found in Bos taurus (Bovine).